Reading from the N-terminus, the 78-residue chain is Large ribosomal subunit protein bL28 (78 aa).

Residues 1–25 (MARVCQVTGKRPMSGHHVSHANNKT) are disordered. Positions 13–25 (MSGHHVSHANNKT) are enriched in basic residues.

Belongs to the bacterial ribosomal protein bL28 family.

This is Large ribosomal subunit protein bL28 from Nitrosomonas eutropha (strain DSM 101675 / C91 / Nm57).